Here is a 630-residue protein sequence, read N- to C-terminus: Chaperone protein HtpG (630 aa).

Residues 1-327 form an a; substrate-binding region; it reads MSVETYKFDA…SEDLSLNISR (327 aa). The segment at 328–551 is b; that stretch reads ETLQHSPLID…EGSMDIRTER (224 aa). Residues 483-499 are compositionally biased toward basic and acidic residues; the sequence is TKTAKSSDTNNDGKDDT. Positions 483–504 are disordered; it reads TKTAKSSDTNNDGKDDTSSSDD. The tract at residues 552-630 is c; sequence FLIEQKQLSS…INFFIEKSVN (79 aa).

This sequence belongs to the heat shock protein 90 family. Homodimer.

Its subcellular location is the cytoplasm. Its function is as follows. Molecular chaperone. Has ATPase activity. The polypeptide is Chaperone protein HtpG (Orientia tsutsugamushi (strain Boryong) (Rickettsia tsutsugamushi)).